A 362-amino-acid chain; its full sequence is Heat-inducible transcription repressor HrcA (362 aa).

It belongs to the HrcA family.

Functionally, negative regulator of class I heat shock genes (grpE-dnaK-dnaJ and groELS operons). Prevents heat-shock induction of these operons. The protein is Heat-inducible transcription repressor HrcA of Nitrobacter winogradskyi (strain ATCC 25391 / DSM 10237 / CIP 104748 / NCIMB 11846 / Nb-255).